Here is a 447-residue protein sequence, read N- to C-terminus: Mannose/glucose-specific lectin (447 aa).

Jacalin-type lectin domains are found at residues 5–148 (MISV…FVKP), 153–294 (TISF…YVKP), and 300–443 (SISI…FVKP).

The protein belongs to the jacalin lectin family. Expressed in seeds (at protein level).

With respect to regulation, hemagglutinating activity is slightly inhibited by alpha-methyl-D-mannopyranoside. D-mannose/D-glucose-binding lectin that also binds derivatives N-acetyl-D-glucosamine and alpha-methyl-D-mannopyranoside. Does not bind D-galactose, L-Rhamnose, D-fructose, lactose or glycoproteins fetiun and mucin. Shows agglutinating activity towards human and rabbit erythrocytes. Also displays antimicrobial activity against L.infantum. The sequence is that of Mannose/glucose-specific lectin from Parkia pendula (Inga pendula).